The sequence spans 525 residues: Probable lipid II flippase MurJ (525 aa).

14 helical membrane-spanning segments follow: residues 10–30, 32–52, 100–120, 140–160, 171–191, 203–223, 247–267, 285–305, 330–350, 368–388, 402–422, 423–443, 455–475, and 495–515; these read LLKSGIIVSAMTLISRVLGLV, DVVVANLMGAGASADVFFFAN, VLVTIVTLIGVLGSGAVTALF, LASLLLKITFPYLWFITFVAL, FAVSSFTPVFLNVMMILCAWY, LAIGVFLGGLVQFLFQLPFLI, MIPALFGVSVSQINLLFDSFV, LLEFPLGLFGIAIATVILPAL, FLGIPAMLGLMVLAKPMLMVL, LLAYSSGLLSFMLIKVLAPGY, IIAMVSNIVLNAIFAWFYGYV, GLAVATSMSAFLNMALLYRGL, TVWFVARLAMAGAVMTGALLW, and LTGLIGLGVASYLAILLLLGV.

The protein belongs to the MurJ/MviN family.

The protein localises to the cell inner membrane. The protein operates within cell wall biogenesis; peptidoglycan biosynthesis. Functionally, involved in peptidoglycan biosynthesis. Transports lipid-linked peptidoglycan precursors from the inner to the outer leaflet of the cytoplasmic membrane. In Vibrio cholerae serotype O1 (strain ATCC 39315 / El Tor Inaba N16961), this protein is Probable lipid II flippase MurJ.